Reading from the N-terminus, the 384-residue chain is 4-hydroxy-3-methylbut-2-en-1-yl diphosphate synthase (flavodoxin) (384 aa).

Positions 272, 275, 307, and 314 each coordinate [4Fe-4S] cluster.

The protein belongs to the IspG family. The cofactor is [4Fe-4S] cluster.

It catalyses the reaction (2E)-4-hydroxy-3-methylbut-2-enyl diphosphate + oxidized [flavodoxin] + H2O + 2 H(+) = 2-C-methyl-D-erythritol 2,4-cyclic diphosphate + reduced [flavodoxin]. Its pathway is isoprenoid biosynthesis; isopentenyl diphosphate biosynthesis via DXP pathway; isopentenyl diphosphate from 1-deoxy-D-xylulose 5-phosphate: step 5/6. In terms of biological role, converts 2C-methyl-D-erythritol 2,4-cyclodiphosphate (ME-2,4cPP) into 1-hydroxy-2-methyl-2-(E)-butenyl 4-diphosphate. In Rhodospirillum rubrum (strain ATCC 11170 / ATH 1.1.1 / DSM 467 / LMG 4362 / NCIMB 8255 / S1), this protein is 4-hydroxy-3-methylbut-2-en-1-yl diphosphate synthase (flavodoxin).